A 505-amino-acid chain; its full sequence is Probable cytochrome P450 28c1 (505 aa).

Cys444 contributes to the heme binding site.

It belongs to the cytochrome P450 family. The cofactor is heme.

The protein resides in the endoplasmic reticulum membrane. It localises to the microsome membrane. In terms of biological role, may be involved in the metabolism of insect hormones and in the breakdown of synthetic insecticides. The protein is Probable cytochrome P450 28c1 (Cyp28c1) of Drosophila melanogaster (Fruit fly).